Here is a 461-residue protein sequence, read N- to C-terminus: Alpha-L-fucosidase (461 aa).

An N-terminal signal peptide occupies residues Met1–Ser18.

Belongs to the glycosyl hydrolase 29 family.

The catalysed reaction is an alpha-L-fucoside + H2O = L-fucose + an alcohol. Its function is as follows. Alpha-L-fucosidase is responsible for hydrolyzing the alpha-1,6-linked fucose joined to the reducing-end N-acetylglucosamine of the carbohydrate moieties of glycoproteins. The polypeptide is Alpha-L-fucosidase (alfA) (Dictyostelium discoideum (Social amoeba)).